We begin with the raw amino-acid sequence, 107 residues long: MCTGSTGSLIPSVSDSANSVRRGNLSLCSVLLSWLICAMCLWNDARESLVNVRIANYVFDFAVLWTLLARVLGPPGRPVLQQHHPVQLPVPTEPSVFVKLCNQRVRL.

Residues 25-42 (LSLCSVLLSWLICAMCLW) form a helical membrane-spanning segment.

It localises to the host membrane. This is an uncharacterized protein from Galliformes (FAdV-1).